The sequence spans 436 residues: GDP-mannose 6-dehydrogenase (436 aa).

Residues Y10, V11, D30, K35, T86, and T124 each coordinate NAD(+). Residues E161, K210, N214, H217, N225, Y256, Y257, R259, and G265 each contribute to the GDP-alpha-D-mannuronate site. C268 is a catalytic residue. K271 lines the NAD(+) pocket. K324 provides a ligand contact to GDP-alpha-D-mannuronate. Position 331 (R331) interacts with NAD(+).

The protein belongs to the UDP-glucose/GDP-mannose dehydrogenase family.

The catalysed reaction is GDP-alpha-D-mannose + 2 NAD(+) + H2O = GDP-alpha-D-mannuronate + 2 NADH + 3 H(+). Its pathway is glycan biosynthesis; alginate biosynthesis. In terms of biological role, catalyzes the oxidation of guanosine diphospho-D-mannose (GDP-D-mannose) to GDP-D-mannuronic acid, a precursor for alginate polymerization. The alginate layer causes a mucoid phenotype and is essential for cyst formation. The polypeptide is GDP-mannose 6-dehydrogenase (algD) (Azotobacter vinelandii).